Consider the following 240-residue polypeptide: Dephospho-CoA kinase domain-containing protein (240 aa).

Residues Leu-3 to Leu-207 form the DPCK domain. ATP is bound at residue Gly-8–Ser-15.

The protein belongs to the CoaE family.

This Rattus norvegicus (Rat) protein is Dephospho-CoA kinase domain-containing protein (Dcakd).